The primary structure comprises 258 residues: Hydroxyacylglutathione hydrolase (258 aa).

7 residues coordinate Zn(2+): H55, H57, D59, H60, H115, D132, and H170.

The protein belongs to the metallo-beta-lactamase superfamily. Glyoxalase II family. Monomer. Zn(2+) is required as a cofactor.

It catalyses the reaction an S-(2-hydroxyacyl)glutathione + H2O = a 2-hydroxy carboxylate + glutathione + H(+). It participates in secondary metabolite metabolism; methylglyoxal degradation; (R)-lactate from methylglyoxal: step 2/2. Functionally, thiolesterase that catalyzes the hydrolysis of S-D-lactoyl-glutathione to form glutathione and D-lactic acid. This Shewanella halifaxensis (strain HAW-EB4) protein is Hydroxyacylglutathione hydrolase.